Here is a 544-residue protein sequence, read N- to C-terminus: Chaperonin GroEL (544 aa).

Residues 29-32 (TIGP), 86-90 (DGTTT), Gly413, 478-480 (NAA), and Asp494 each bind ATP.

It belongs to the chaperonin (HSP60) family. In terms of assembly, forms a cylinder of 14 subunits composed of two heptameric rings stacked back-to-back. Interacts with the co-chaperonin GroES.

Its subcellular location is the cytoplasm. It carries out the reaction ATP + H2O + a folded polypeptide = ADP + phosphate + an unfolded polypeptide.. In terms of biological role, together with its co-chaperonin GroES, plays an essential role in assisting protein folding. The GroEL-GroES system forms a nano-cage that allows encapsulation of the non-native substrate proteins and provides a physical environment optimized to promote and accelerate protein folding. The polypeptide is Chaperonin GroEL (Exiguobacterium sp. (strain ATCC BAA-1283 / AT1b)).